We begin with the raw amino-acid sequence, 535 residues long: Unconventional prefoldin RPB5 interactor 1 (535 aa).

M1 is modified (N-acetylmethionine). Disordered stretches follow at residues 1 to 23, 223 to 330, 352 to 383, and 412 to 431; these read MEAP…PALV, LLGE…VGDN, KNTT…QELP, and SRSR…AAEF. Residues 7–18 are compositionally biased toward pro residues; the sequence is ETPPDPSPPSAP. 2 stretches are compositionally biased toward polar residues: residues 253-265 and 276-296; these read TNVN…TDSH and EPFS…SSSY. Positions 299–320 are enriched in acidic residues; the sequence is DDDDDDDDDDDDDNIDDDDGDN. The residue at position 372 (S372) is a Phosphoserine; by RPS6KB1. T373 bears the Phosphothreonine mark. Over residues 417–427 the composition is skewed to polar residues; that stretch reads NSVCSDTSESS. A Phosphoserine modification is found at S442.

The protein belongs to the RNA polymerase II subunit 5-mediating protein family. As to quaternary structure, homodimer. Component of the PAQosome complex which is responsible for the biogenesis of several protein complexes and which consists of R2TP complex members RUVBL1, RUVBL2, RPAP3 and PIH1D1, URI complex members PFDN2, PFDN6, PDRG1, UXT and URI1 as well as ASDURF, POLR2E and DNAAF10/WDR92. Interacts with POLR2E/RPB5, RUVBL2 and RUVBL1. Interacts with PFDN2, PFDN4 and STAP1; the interactions are phosphorylation-dependent and occur in a growth-dependent manner in the mitochondrion. Interacts with UXT. Interacts with PPP1CC; the interaction is phosphorylation-dependent and occurs in a growth factor-dependent manner. Interacts (via the middle C-terminal region) with GTF2F1 and GTF2F2. Interacts with DMAP1. Interacts with TSC1 and TSC2. Interacts with PRPF8 and EFTUD2 in a ZNHIT2-dependent manner. Phosphorylated. Phosphorylation occurs essentially on serine residues. Phosphorylation occurs in response to androgen treatment in prostate cancer cells in a mTOR-dependent manner. Phosphorylated; hyperhosphorylated in mitochondria in a mTORC-dependent signaling pathway. Phosphorylated at Ser-372 by RPS6KB1 in a growth factor- and rapamycin-dependent manner. S6K1-mediated mitochondrial phosphorylation at Ser-372 disrupts the URI1-PPP1CC complex in the mitochondrion, relieves PPP1CC phosphatase inhibition activity and hence engages a negative feedback diminishing RPS6KB1 kinase activity, preventing sustained S6K1-dependent signaling. Ubiquitous. Expressed in ovarian cancers (at protein level). Expressed strongly in skeletal muscle. Expressed weakly in brain, heart, pancreas and in prostate epithelial cells.

It localises to the nucleus. The protein resides in the cytoplasm. The protein localises to the mitochondrion. Its subcellular location is the cell projection. It is found in the dendrite. Its function is as follows. Involved in gene transcription regulation. Acts as a transcriptional repressor in concert with the corepressor UXT to regulate androgen receptor (AR) transcription. May act as a tumor suppressor to repress AR-mediated gene transcription and to inhibit anchorage-independent growth in prostate cancer cells. Required for cell survival in ovarian cancer cells. Together with UXT, associates with chromatin to the NKX3-1 promoter region. Antagonizes transcriptional modulation via hepatitis B virus X protein. In terms of biological role, plays a central role in maintaining S6K1 signaling and BAD phosphorylation under normal growth conditions thereby protecting cells from potential deleterious effects of sustained S6K1 signaling. The URI1-PPP1CC complex acts as a central component of a negative feedback mechanism that counteracts excessive S6K1 survival signaling to BAD in response to growth factors. Mediates inhibition of PPP1CC phosphatase activity in mitochondria. Coordinates the regulation of nutrient-sensitive gene expression availability in a mTOR-dependent manner. Seems to be a scaffolding protein able to assemble a prefoldin-like complex that contains PFDs and proteins with roles in transcription and ubiquitination. The protein is Unconventional prefoldin RPB5 interactor 1 (URI1) of Homo sapiens (Human).